Consider the following 262-residue polypeptide: T-cell surface glycoprotein YE1/48 (262 aa).

At Met1 to Lys44 the chain is on the cytoplasmic side. The chain crosses the membrane as a helical; Signal-anchor for type II membrane protein span at residues Phe45–Ile66. Residues Lys67 to His262 are Extracellular-facing. N-linked (GlcNAc...) asparagine glycans are attached at residues Asn86, Asn103, and Asn123. Residues Arg137–Asp139 carry the Cell attachment site motif. Residues Gly138–Leu257 enclose the C-type lectin domain. 4 cysteine pairs are disulfide-bonded: Cys145–Cys150, Cys163–Cys251, Cys167–Cys253, and Cys232–Cys245.

In terms of assembly, homodimer; disulfide-linked. As to expression, high, in T-lymphoma lines, very low in normal lymphocytes.

Its subcellular location is the membrane. Receptor on natural killer (NK) cells for H-2d alleles. Inhibits the activity of NK cells thus preventing cell lysis. This chain is T-cell surface glycoprotein YE1/48 (Klra1), found in Mus musculus (Mouse).